A 145-amino-acid polypeptide reads, in one-letter code: uncharacterized protein (145 aa).

The protein belongs to the methyltransferase superfamily.

Probable methyltransferase. This is an uncharacterized protein from Schizosaccharomyces pombe (strain 972 / ATCC 24843) (Fission yeast).